A 522-amino-acid polypeptide reads, in one-letter code: Cytochrome b mRNA maturase bI3 (522 aa).

At 1–31 (MTIRKSNPYLSLVNSYLMDSPQPSSMNYWWN) the chain is on the mitochondrial matrix side. The cytochrome b stretch occupies residues 1–163 (MTIRKSNPYL…MPFMGGDLVP (163 aa)). Residues 32–52 (VGSLLGLCLVMQMASGMFLAM) traverse the membrane as a helical segment. Over 53-84 (HYSSSMELAFNSVEHMMRDVNAGWLMRYIHAN) the chain is Mitochondrial intermembrane. A helical transmembrane segment spans residues 85–105 (GASFFFMCLYLHMGKALYYGS). Topologically, residues 106 to 110 (YKSPR) are mitochondrial matrix. Residues 111–131 (VLVWSMGVMMFMLTMATAFMG) form a helical membrane-spanning segment. The Mitochondrial intermembrane segment spans residues 132–154 (YCLVYGQMSHWGATVITNLLSAM). A helical transmembrane segment spans residues 155–175 (PFMGGDLVPLSIILSLYLLYI). Positions 164 to 522 (LSIILSLYLL…PYMSWHQKEQ (359 aa)) are maturase. The Mitochondrial matrix segment spans residues 176–522 (SLKTFMKMIF…PYMSWHQKEQ (347 aa)).

This sequence in the N-terminal section; belongs to the cytochrome b family. It in the C-terminal section; belongs to the LAGLIDADG endonuclease family.

The protein localises to the mitochondrion inner membrane. Functionally, mitochondrial mRNA maturase required for splicing of intron 3 of the cytochrome b (COB) gene, containing its own coding sequence. The sequence is that of Cytochrome b mRNA maturase bI3 (bI3) from Debaryomyces hansenii (strain ATCC 36239 / CBS 767 / BCRC 21394 / JCM 1990 / NBRC 0083 / IGC 2968) (Yeast).